Here is a 39-residue protein sequence, read N- to C-terminus: Omega-actinopoditoxin-Mb1a (39 aa).

Cystine bridges form between Cys4-Cys19, Cys11-Cys30, and Cys18-Cys38.

Post-translationally, contains 3 disulfide bonds. As to expression, expressed by the venom gland.

It localises to the secreted. Functionally, potent inhibitor of insect, but not mammalian, voltage-gated calcium channels (Cav). The protein is Omega-actinopoditoxin-Mb1a of Missulena bradleyi (Eastern mouse spider).